The sequence spans 312 residues: MTQAAEHITVLLHEAVEGLAIKPDGIYVDGTFGRGGHSRLILQHLGPNGRLIAIDRDPQAIAEAAKIQDPRFEIVHGPFSGIVSYLDERGLLGKVDGFLLDLGVSSPQLDDAERGFSFMKDGPLDMRMDPTSGQSAAQWLARADVDDIAWVLKTFGEERFAKKIARAIVHDRVTEPYVRTRQLAEMIARVNPSKEKGKHAATRSFQAIRIYINSELDEIETALNGALQALAPEGRLSVISFHSLEDRLVKHFIRKHEKGPEVPRGIPLTEAQLAGGRKLKSVGKALKPSEHEVTENSRSRSSVLRVAQRLAE.

S-adenosyl-L-methionine contacts are provided by residues 35 to 37, Asp55, Asp101, and Gln108; that span reads GGH. The disordered stretch occupies residues 285-306; that stretch reads ALKPSEHEVTENSRSRSSVLRV. Basic and acidic residues predominate over residues 287 to 298; it reads KPSEHEVTENSR.

Belongs to the methyltransferase superfamily. RsmH family.

Its subcellular location is the cytoplasm. It catalyses the reaction cytidine(1402) in 16S rRNA + S-adenosyl-L-methionine = N(4)-methylcytidine(1402) in 16S rRNA + S-adenosyl-L-homocysteine + H(+). Specifically methylates the N4 position of cytidine in position 1402 (C1402) of 16S rRNA. This Aeromonas salmonicida (strain A449) protein is Ribosomal RNA small subunit methyltransferase H.